Consider the following 383-residue polypeptide: Histidine decarboxylase (383 aa).

His-120 contributes to the substrate binding site. N6-(pyridoxal phosphate)lysine is present on Lys-233.

Belongs to the group II decarboxylase family. Homotetramer. Pyridoxal 5'-phosphate serves as cofactor.

It carries out the reaction L-histidine + H(+) = histamine + CO2. In Acinetobacter baumannii (strain ACICU), this protein is Histidine decarboxylase.